The primary structure comprises 62 residues: DNA-directed RNA polymerase subunit Rpo10 (62 aa).

4 residues coordinate Zn(2+): Cys-6, Cys-9, Cys-43, and Cys-44.

This sequence belongs to the archaeal Rpo10/eukaryotic RPB10 RNA polymerase subunit family. In terms of assembly, part of the RNA polymerase complex. The cofactor is Zn(2+).

Its subcellular location is the cytoplasm. It carries out the reaction RNA(n) + a ribonucleoside 5'-triphosphate = RNA(n+1) + diphosphate. In terms of biological role, DNA-dependent RNA polymerase (RNAP) catalyzes the transcription of DNA into RNA using the four ribonucleoside triphosphates as substrates. The protein is DNA-directed RNA polymerase subunit Rpo10 of Methanoculleus marisnigri (strain ATCC 35101 / DSM 1498 / JR1).